A 199-amino-acid polypeptide reads, in one-letter code: Protein GrpE (199 aa).

Residues 1 to 40 (MEKKKHGTNSISEALKVKAAVEQETATPEPTPQSETESAD) are disordered. The segment covering 24-36 (ETATPEPTPQSET) has biased composition (polar residues).

The protein belongs to the GrpE family. In terms of assembly, homodimer.

It is found in the cytoplasm. Functionally, participates actively in the response to hyperosmotic and heat shock by preventing the aggregation of stress-denatured proteins, in association with DnaK and GrpE. It is the nucleotide exchange factor for DnaK and may function as a thermosensor. Unfolded proteins bind initially to DnaJ; upon interaction with the DnaJ-bound protein, DnaK hydrolyzes its bound ATP, resulting in the formation of a stable complex. GrpE releases ADP from DnaK; ATP binding to DnaK triggers the release of the substrate protein, thus completing the reaction cycle. Several rounds of ATP-dependent interactions between DnaJ, DnaK and GrpE are required for fully efficient folding. This is Protein GrpE from Geotalea uraniireducens (strain Rf4) (Geobacter uraniireducens).